A 173-amino-acid polypeptide reads, in one-letter code: Calcineurin subunit B (173 aa).

EF-hand domains lie at 20-55 (DEID…AANP), 59-87 (RLMD…FSTK), 89-124 (NKKE…MVGN), and 130-165 (QLQQ…TNVY). Ca(2+) is bound by residues D33, D35, S37, E44, D65, N67, S69, D71, E76, D102, D104, D106, Y108, E113, D143, D145, D147, K149, and E154.

Belongs to the calcineurin regulatory subunit family. In terms of assembly, composed of a catalytic subunit (A) and a regulatory subunit (B).

In terms of biological role, regulatory subunit of calcineurin, a calcium-dependent, calmodulin stimulated protein phosphatase. Confers calcium sensitivity. This chain is Calcineurin subunit B (CNB1), found in Yarrowia lipolytica (strain CLIB 122 / E 150) (Yeast).